Here is an 809-residue protein sequence, read N- to C-terminus: Sucrose synthase 2 (809 aa).

The GT-B glycosyltransferase stretch occupies residues 278-756 (MVFNVVILSP…GLQRIYERYT (479 aa)).

Belongs to the glycosyltransferase 1 family. Plant sucrose synthase subfamily.

It catalyses the reaction an NDP-alpha-D-glucose + D-fructose = a ribonucleoside 5'-diphosphate + sucrose + H(+). Its function is as follows. Sucrose-cleaving enzyme that provides UDP-glucose and fructose for various metabolic pathways. The polypeptide is Sucrose synthase 2 (SUS2) (Pisum sativum (Garden pea)).